Reading from the N-terminus, the 333-residue chain is Glycerol-3-phosphate dehydrogenase [NAD(P)+] 2 (333 aa).

Residues S12, W13, R32, and K106 each contribute to the NADPH site. Positions 106 and 134 each coordinate sn-glycerol 3-phosphate. NADPH is bound at residue A138. The sn-glycerol 3-phosphate site is built by K189, D242, S252, R253, and N254. K189 (proton acceptor) is an active-site residue. Position 253 (R253) interacts with NADPH. Positions 277 and 279 each coordinate NADPH.

The protein belongs to the NAD-dependent glycerol-3-phosphate dehydrogenase family.

It is found in the cytoplasm. The catalysed reaction is sn-glycerol 3-phosphate + NAD(+) = dihydroxyacetone phosphate + NADH + H(+). It carries out the reaction sn-glycerol 3-phosphate + NADP(+) = dihydroxyacetone phosphate + NADPH + H(+). It participates in membrane lipid metabolism; glycerophospholipid metabolism. Its function is as follows. Catalyzes the reduction of the glycolytic intermediate dihydroxyacetone phosphate (DHAP) to sn-glycerol 3-phosphate (G3P), the key precursor for phospholipid synthesis. The sequence is that of Glycerol-3-phosphate dehydrogenase [NAD(P)+] 2 from Sphingopyxis alaskensis (strain DSM 13593 / LMG 18877 / RB2256) (Sphingomonas alaskensis).